The primary structure comprises 173 residues: Putative phosphoesterase GK0864 (173 aa).

His34 functions as the Proton donor in the catalytic mechanism. 2 short sequence motifs (HXTX) span residues 34-37 (HITL) and 115-118 (HITI). The active-site Proton acceptor is the His115.

The protein belongs to the 2H phosphoesterase superfamily. YjcG family.

The sequence is that of Putative phosphoesterase GK0864 from Geobacillus kaustophilus (strain HTA426).